A 433-amino-acid polypeptide reads, in one-letter code: Homeobox protein Hox-D3 (433 aa).

Disordered stretches follow at residues 44-198 (STPH…SKRV), 258-280 (GILH…AAGH), and 401-433 (HHGP…LTHL). Residues 58-74 (SLDSDYPSSACSIQSSA) are compositionally biased toward polar residues. Residues 97–106 (NSQGGGGGNQ) are compositionally biased toward gly residues. Positions 116-132 (PPQPPPPPPPTLPPSSP) are enriched in pro residues. The span at 146–159 (GGLSASSSSSTISK) shows a compositional bias: low complexity. Residues 161–166 (IFPWMK) carry the Antp-type hexapeptide motif. The span at 171 to 183 (NSKQKNSCATSGE) shows a compositional bias: polar residues. A DNA-binding region (homeobox) is located at residues 195 to 254 (SKRVRTAYTSAQLVELEKEFHFNRYLCRPRRVEMANLLNLTERQIKIWFQNRRMKYKKDQ).

The protein belongs to the Antp homeobox family. In terms of tissue distribution, detected in adult kidney, but not in other adult tissues tested.

Its subcellular location is the nucleus. In terms of biological role, sequence-specific transcription factor which is part of a developmental regulatory system that provides cells with specific positional identities on the anterior-posterior axis. The polypeptide is Homeobox protein Hox-D3 (Hoxd3) (Mus musculus (Mouse)).